The chain runs to 93 residues: Small ribosomal subunit protein uS19 (93 aa).

Belongs to the universal ribosomal protein uS19 family.

Functionally, protein S19 forms a complex with S13 that binds strongly to the 16S ribosomal RNA. The sequence is that of Small ribosomal subunit protein uS19 (rpsS) from Thermus thermophilus (strain ATCC BAA-163 / DSM 7039 / HB27).